The primary structure comprises 189 residues: Photosystem I assembly protein Ycf4 (189 aa).

Transmembrane regions (helical) follow at residues 25-45 and 62-82; these read SVYF…LAGL and LVFI…SLAG.

Belongs to the Ycf4 family.

It is found in the cellular thylakoid membrane. Its function is as follows. Seems to be required for the assembly of the photosystem I complex. The polypeptide is Photosystem I assembly protein Ycf4 (Synechococcus sp. (strain JA-3-3Ab) (Cyanobacteria bacterium Yellowstone A-Prime)).